The primary structure comprises 167 residues: Mitochondrial fission 1 protein B (167 aa).

The TPR repeat unit spans residues 92–125 (REKLYLLALGYYRSGDFSRSRDCIERCLEVEPES). Residues 144 to 164 (VIGVGIAVTAVGVVAGIAAAI) form a helical membrane-spanning segment.

It belongs to the FIS1 family. In terms of assembly, interacts with PEX11A, PEX11B, PEX11C, PEX11D and PEX11E.

It localises to the mitochondrion outer membrane. The protein resides in the peroxisome membrane. Its function is as follows. Component of the peroxisomal and mitochondrial division machineries. Plays a role in promoting the fission of mitochondria and peroxisomes. In association with PEX11C, PEX11D, PEX11E and DRP3A, is involved in cell cycle-associated constitutive self-replication of preexisting peroxisomes. This chain is Mitochondrial fission 1 protein B (FIS1B), found in Arabidopsis thaliana (Mouse-ear cress).